The following is a 507-amino-acid chain: Alkyl hydroperoxide reductase subunit F (507 aa).

Asp207–Ile222 is an FAD binding site. Cys335 and Cys338 are disulfide-bonded. Asp347–Ala361 serves as a coordination point for NAD(+). Thr467–Asp477 contributes to the FAD binding site.

Belongs to the class-II pyridine nucleotide-disulfide oxidoreductase family. As to quaternary structure, homodimer. FAD serves as cofactor.

Its function is as follows. Serves to protect the cell against DNA damage by alkyl hydroperoxides. It can use either NADH or NADPH as electron donor for direct reduction of redox dyes or of alkyl hydroperoxides when combined with the AhpC protein. The sequence is that of Alkyl hydroperoxide reductase subunit F (ahpF) from Staphylococcus aureus (strain NCTC 8325 / PS 47).